Here is a 43-residue protein sequence, read N- to C-terminus: Protein PsbN (43 aa).

The chain crosses the membrane as a helical span at residues 4-24 (ATFVAIFISCLLISFTGYALY).

The protein belongs to the PsbN family.

It localises to the plastid. Its subcellular location is the chloroplast thylakoid membrane. May play a role in photosystem I and II biogenesis. The sequence is that of Protein PsbN from Marchantia polymorpha (Common liverwort).